Consider the following 52-residue polypeptide: Conotoxin Cal6.36 (52 aa).

The N-terminal stretch at 1-22 (MKVTCVLTLAVLILTVGQMVTA) is a signal peptide. Disulfide bonds link Cys-24–Cys-39, Cys-31–Cys-43, and Cys-38–Cys-47.

Expressed by the venom duct.

The protein localises to the secreted. Functionally, probable neurotoxin. The chain is Conotoxin Cal6.36 from Californiconus californicus (California cone).